A 78-amino-acid polypeptide reads, in one-letter code: Broad mercury transporter MerE (78 aa).

2 helical membrane passes run 19–39 (LWGA…AAVL) and 47–67 (FLGE…VLAV).

It is found in the cell inner membrane. Its function is as follows. Broad mercury transporter that mediates the transport of both CH(3)Hg(I) and Hg(II) across the membrane. This chain is Broad mercury transporter MerE, found in Shigella flexneri.